The primary structure comprises 488 residues: Aspartyl/glutamyl-tRNA(Asn/Gln) amidotransferase subunit B (488 aa).

Belongs to the GatB/GatE family. GatB subfamily. As to quaternary structure, heterotrimer of A, B and C subunits.

It carries out the reaction L-glutamyl-tRNA(Gln) + L-glutamine + ATP + H2O = L-glutaminyl-tRNA(Gln) + L-glutamate + ADP + phosphate + H(+). The enzyme catalyses L-aspartyl-tRNA(Asn) + L-glutamine + ATP + H2O = L-asparaginyl-tRNA(Asn) + L-glutamate + ADP + phosphate + 2 H(+). Allows the formation of correctly charged Asn-tRNA(Asn) or Gln-tRNA(Gln) through the transamidation of misacylated Asp-tRNA(Asn) or Glu-tRNA(Gln) in organisms which lack either or both of asparaginyl-tRNA or glutaminyl-tRNA synthetases. The reaction takes place in the presence of glutamine and ATP through an activated phospho-Asp-tRNA(Asn) or phospho-Glu-tRNA(Gln). The sequence is that of Aspartyl/glutamyl-tRNA(Asn/Gln) amidotransferase subunit B from Chlamydia trachomatis serovar A (strain ATCC VR-571B / DSM 19440 / HAR-13).